The primary structure comprises 249 residues: Carbohydrate deacetylase (249 aa).

Residues histidine 60 and histidine 125 each coordinate Mg(2+).

This sequence belongs to the YdjC deacetylase family. In terms of assembly, homodimer. The cofactor is Mg(2+).

Probably catalyzes the deacetylation of acetylated carbohydrates an important step in the degradation of oligosaccharides. This is Carbohydrate deacetylase from Thermoanaerobacter pseudethanolicus (strain ATCC 33223 / 39E) (Clostridium thermohydrosulfuricum).